We begin with the raw amino-acid sequence, 361 residues long: Chorismate synthase (361 aa).

2 residues coordinate NADP(+): R48 and R54. FMN is bound by residues 125-127 (RSS), 238-239 (NA), G278, 293-297 (KPTSS), and R319.

Belongs to the chorismate synthase family. As to quaternary structure, homotetramer. FMNH2 serves as cofactor.

It carries out the reaction 5-O-(1-carboxyvinyl)-3-phosphoshikimate = chorismate + phosphate. Its pathway is metabolic intermediate biosynthesis; chorismate biosynthesis; chorismate from D-erythrose 4-phosphate and phosphoenolpyruvate: step 7/7. Functionally, catalyzes the anti-1,4-elimination of the C-3 phosphate and the C-6 proR hydrogen from 5-enolpyruvylshikimate-3-phosphate (EPSP) to yield chorismate, which is the branch point compound that serves as the starting substrate for the three terminal pathways of aromatic amino acid biosynthesis. This reaction introduces a second double bond into the aromatic ring system. This chain is Chorismate synthase, found in Shigella flexneri.